Reading from the N-terminus, the 506-residue chain is Tyrosine-protein phosphatase non-receptor type substrate 1 (506 aa).

The first 29 residues, 1 to 29 (MEPARPAPGRLRPLLCLLLAASNAWTGTA), serve as a signal peptide directing secretion. Residues 30–145 (GDGELQVIQP…SGPGTHLTVS (116 aa)) form the Ig-like V-type domain. Over 30–371 (GDGELQVIQP…PGPNDSNWTS (342 aa)) the chain is Extracellular. A disulfide bridge links C55 with C121. Residue N92 is glycosylated (N-linked (GlcNAc...) asparagine). The disordered stretch occupies residues 136 to 159 (SGPGTHLTVSAKPSPPVLSGPTVR). 2 consecutive Ig-like C1-type domains span residues 148–248 (PSPP…ANLS) and 255–348 (PTLE…HTLE). 12 N-linked (GlcNAc...) asparagine glycosylation sites follow: N167, N179, N204, N210, N246, N270, N292, N311, N319, N344, N365, and N368. C170 and C228 are oxidised to a cystine. C273 and C331 form a disulfide bridge. Residues 344–364 (NHTLEVSAPQKDQDTGQTPGP) form a disordered region. The chain crosses the membrane as a helical span at residues 372–392 (IFIVVGVVCALLVALLIAALY). Residues 393-506 (LLRIRQNKAK…EYASVQVQRK (114 aa)) lie on the Cytoplasmic side of the membrane. The disordered stretch occupies residues 402–468 (KGSTSSTRLH…QARPPPVSED (67 aa)). A compositionally biased stretch (basic and acidic residues) spans 409–418 (RLHEPEKNTR). The span at 419–429 (ETTQIQDNNDI) shows a compositional bias: polar residues. Y431 is modified (phosphotyrosine; by Tyr-kinases). The short motif at 432–435 (ADLN) is the SH2-binding element. An SH3-binding motif is present at residues 441–446 (KSTPKA). Positions 444–456 (PKANEPNNHTEYA) are enriched in polar residues. 3 positions are modified to phosphotyrosine; by Tyr-kinases: Y455, Y472, and Y498. 3 consecutive short sequence motifs (SH2-binding) follow at residues 455-458 (YASI), 472-475 (YADL), and 498-501 (YASV). Residues 480–506 (LNRTPKQPAPKPEPSYSEYASVQVQRK) are disordered. Over residues 497-506 (EYASVQVQRK) the composition is skewed to polar residues.

In terms of assembly, binds PTPN11 when tyrosine-phosphorylated, except in macrophages, where it primarily binds PTPN6. Binds GRB2 in vitro. Binds JAK2 irrespective of its phosphorylation status and forms a stable complex. Binds SCAP1 and/or SCAP2. The resulting complex recruits FYB1. Binds FGR and PTK2B. Interacts with TRIM2. In terms of processing, phosphorylated on tyrosine residues. Highly expressed in spleen macrophages. Detected in skin dendritic cells.

It localises to the membrane. Its function is as follows. Immunoglobulin-like cell surface receptor for CD47. Acts as docking protein and induces translocation of PTPN6, PTPN11 and other binding partners from the cytosol to the plasma membrane. Supports adhesion of cerebellar neurons, neurite outgrowth and glial cell attachment. May play a key role in intracellular signaling during synaptogenesis and in synaptic function. Involved in the negative regulation of receptor tyrosine kinase-coupled cellular responses induced by cell adhesion, growth factors or insulin. Mediates negative regulation of phagocytosis, mast cell activation and dendritic cell activation. CD47 binding prevents maturation of immature dendritic cells and inhibits cytokine production by mature dendritic cells. Plays a role in antiviral immunity and limits new world arenavirus infection by decreasing virus internalization. Receptor for THBS1. Interaction with THBS1 stimulates phosphorylation of SIRPA. In response to THBS1, involved in ROS signaling in non-phagocytic cells, stimulating NADPH oxidase-derived ROS production. The polypeptide is Tyrosine-protein phosphatase non-receptor type substrate 1 (SIRPA) (Bos taurus (Bovine)).